Reading from the N-terminus, the 109-residue chain is Sperm-specific class P protein 19 (109 aa).

The 109-residue stretch at 1–109 (MSLTADPPAC…TVTIPMSATA (109 aa)) folds into the MSP domain.

In terms of assembly, monomer. Expressed at higher level in testis.

This Caenorhabditis elegans protein is Sperm-specific class P protein 19 (ssp-19).